The following is a 127-amino-acid chain: Fluoride-specific ion channel FluC (127 aa).

Transmembrane regions (helical) follow at residues 4–24 (LLLAVFIGGGTGSVARWLLSM), 35–55 (LGTLTANLIGAFIIGMGFAWF), 71–91 (TGFCGGLTTFSTFSAEVVFLL), and 103–123 (VFVNLLGSFAMTALAFWLFSA). Na(+) contacts are provided by Gly-75 and Thr-78.

This sequence belongs to the fluoride channel Fluc/FEX (TC 1.A.43) family.

It localises to the cell inner membrane. The enzyme catalyses fluoride(in) = fluoride(out). Na(+) is not transported, but it plays an essential structural role and its presence is essential for fluoride channel function. In terms of biological role, fluoride-specific ion channel. Important for reducing fluoride concentration in the cell, thus reducing its toxicity. This chain is Fluoride-specific ion channel FluC, found in Escherichia coli (strain ATCC 8739 / DSM 1576 / NBRC 3972 / NCIMB 8545 / WDCM 00012 / Crooks).